The following is a 254-amino-acid chain: CDP-diacylglycerol pyrophosphatase (254 aa).

Residues 6–26 (YFLLALLVAILAALAGGYYWL) form a helical membrane-spanning segment.

It belongs to the Cdh family.

The protein resides in the cell inner membrane. It catalyses the reaction a CDP-1,2-diacyl-sn-glycerol + H2O = a 1,2-diacyl-sn-glycero-3-phosphate + CMP + 2 H(+). Its pathway is phospholipid metabolism; CDP-diacylglycerol degradation; phosphatidate from CDP-diacylglycerol: step 1/1. This is CDP-diacylglycerol pyrophosphatase from Klebsiella pneumoniae (strain 342).